We begin with the raw amino-acid sequence, 218 residues long: Deoxyribose-phosphate aldolase (218 aa).

The active-site Proton donor/acceptor is D89. K152 (schiff-base intermediate with acetaldehyde) is an active-site residue. The active-site Proton donor/acceptor is K182.

It belongs to the DeoC/FbaB aldolase family. DeoC type 1 subfamily.

Its subcellular location is the cytoplasm. It catalyses the reaction 2-deoxy-D-ribose 5-phosphate = D-glyceraldehyde 3-phosphate + acetaldehyde. It functions in the pathway carbohydrate degradation; 2-deoxy-D-ribose 1-phosphate degradation; D-glyceraldehyde 3-phosphate and acetaldehyde from 2-deoxy-alpha-D-ribose 1-phosphate: step 2/2. Catalyzes a reversible aldol reaction between acetaldehyde and D-glyceraldehyde 3-phosphate to generate 2-deoxy-D-ribose 5-phosphate. This is Deoxyribose-phosphate aldolase from Corynebacterium diphtheriae (strain ATCC 700971 / NCTC 13129 / Biotype gravis).